The primary structure comprises 854 residues: uncharacterized protein (854 aa).

This sequence belongs to the PEP-utilizing enzyme family.

This is an uncharacterized protein from Mycobacterium tuberculosis (strain CDC 1551 / Oshkosh).